The following is a 248-amino-acid chain: uncharacterized protein (248 aa).

The signal sequence occupies residues 1-26; sequence MVAPRISPKIVLVGFALFAIISASLA.

This is an uncharacterized protein from Acanthamoeba polyphaga mimivirus (APMV).